We begin with the raw amino-acid sequence, 67 residues long: Small ribosomal subunit protein eS17 (67 aa).

Belongs to the eukaryotic ribosomal protein eS17 family.

The sequence is that of Small ribosomal subunit protein eS17 from Pyrococcus horikoshii (strain ATCC 700860 / DSM 12428 / JCM 9974 / NBRC 100139 / OT-3).